A 446-amino-acid polypeptide reads, in one-letter code: Thymidine phosphorylase (446 aa).

Belongs to the thymidine/pyrimidine-nucleoside phosphorylase family. As to quaternary structure, homodimer.

It carries out the reaction thymidine + phosphate = 2-deoxy-alpha-D-ribose 1-phosphate + thymine. It functions in the pathway pyrimidine metabolism; dTMP biosynthesis via salvage pathway; dTMP from thymine: step 1/2. Functionally, the enzymes which catalyze the reversible phosphorolysis of pyrimidine nucleosides are involved in the degradation of these compounds and in their utilization as carbon and energy sources, or in the rescue of pyrimidine bases for nucleotide synthesis. This is Thymidine phosphorylase from Idiomarina loihiensis (strain ATCC BAA-735 / DSM 15497 / L2-TR).